A 266-amino-acid polypeptide reads, in one-letter code: Luciferase (266 aa).

A helical membrane pass occupies residues G22–I41.

The protein belongs to the fungal luciferase family.

The protein localises to the membrane. The enzyme catalyses 3-hydroxyhispidin + O2 = (E)-caffeoylpyruvate + hnu + CO2. It catalyses the reaction 3-hydroxyhispidin + O2 = 4-[(E)-2-(3,4-dihydroxyphenyl)ethenyl]-1,7-dihydroxy-2,3,5-trioxabicyclo[2.2.2]oct-7-en-6-one. Luciferase; part of the gene cluster that mediates the fungal bioluminescence cycle. Uses the fungal luciferin 3-hydroxyhispidin as a substrate to produce an endoperoxide as a high-energy intermediate with decomposition that yields oxyluciferin (also known as caffeoylpyruvate) and light emission. The fungal bioluminescence cycle begins with the hispidin synthetase that catalyzes the formation of hispidin which is further hydroxylated by the hispidin-3-hydroxylase, yielding the fungal luciferin 3-hydroxyhispidin. The luciferase then produces an endoperoxide as a high-energy intermediate with decomposition that yields oxyluciferin and light emission. Oxyluciferin can be recycled to caffeic acid by caffeoylpyruvate hydrolase. The protein is Luciferase of Armillaria gallica (Bulbous honey fungus).